Here is a 190-residue protein sequence, read N- to C-terminus: Prostaglandin-H2 D-isomerase (190 aa).

Residues 1–22 (MATHHTLWMGLVLLGLLGGLQA) form the signal peptide. Asn-51 carries an N-linked (GlcNAc...) asparagine glycan. Cys-65 acts as the Nucleophile in catalysis. Residue Asn-78 is glycosylated (N-linked (GlcNAc...) asparagine). Cys-89 and Cys-186 form a disulfide bridge.

Belongs to the calycin superfamily. Lipocalin family. In terms of assembly, monomer.

It is found in the rough endoplasmic reticulum. The protein localises to the nucleus membrane. Its subcellular location is the golgi apparatus. It localises to the cytoplasm. The protein resides in the perinuclear region. It is found in the secreted. The enzyme catalyses prostaglandin H2 = prostaglandin D2. Catalyzes the conversion of PGH2 to PGD2, a prostaglandin involved in smooth muscle contraction/relaxation and a potent inhibitor of platelet aggregation. Involved in a variety of CNS functions, such as sedation, NREM sleep and PGE2-induced allodynia, and may have an anti-apoptotic role in oligodendrocytes. Binds small non-substrate lipophilic molecules, including biliverdin, bilirubin, retinal, retinoic acid and thyroid hormone, and may act as a scavenger for harmful hydrophobic molecules and as a secretory retinoid and thyroid hormone transporter. Possibly involved in development and maintenance of the blood-brain, blood-retina, blood-aqueous humor and blood-testis barrier. It is likely to play important roles in both maturation and maintenance of the central nervous system and male reproductive system. Involved in PLA2G3-dependent maturation of mast cells. PLA2G3 is secreted by immature mast cells and acts on nearby fibroblasts upstream to PTDGS to synthesize PGD2, which in turn promotes mast cell maturation and degranulation via PTGDR. In Macaca fuscata fuscata (Japanese macaque), this protein is Prostaglandin-H2 D-isomerase (PTGDS).